The following is a 399-amino-acid chain: Elongation factor Tu (399 aa).

One can recognise a tr-type G domain in the interval 10-207; the sequence is KPHVNVGTIG…ALDSYIPEPV (198 aa). Residues 19-26 are G1; that stretch reads GHIDHGKT. 19–26 lines the GTP pocket; it reads GHIDHGKT. Position 26 (Thr-26) interacts with Mg(2+). Residues 60 to 64 are G2; it reads GITIN. Positions 81–84 are G3; the sequence is DCPG. Residues 81 to 85 and 136 to 139 each bind GTP; these read DCPGH and NKVD. The tract at residues 136-139 is G4; it reads NKVD. Positions 174–176 are G5; it reads SAL.

This sequence belongs to the TRAFAC class translation factor GTPase superfamily. Classic translation factor GTPase family. EF-Tu/EF-1A subfamily. As to quaternary structure, monomer.

The protein localises to the cytoplasm. The enzyme catalyses GTP + H2O = GDP + phosphate + H(+). Functionally, GTP hydrolase that promotes the GTP-dependent binding of aminoacyl-tRNA to the A-site of ribosomes during protein biosynthesis. This chain is Elongation factor Tu, found in Pseudothermotoga lettingae (strain ATCC BAA-301 / DSM 14385 / NBRC 107922 / TMO) (Thermotoga lettingae).